Here is a 243-residue protein sequence, read N- to C-terminus: Phosphoribosylaminoimidazole-succinocarboxamide synthase (243 aa).

Belongs to the SAICAR synthetase family.

It catalyses the reaction 5-amino-1-(5-phospho-D-ribosyl)imidazole-4-carboxylate + L-aspartate + ATP = (2S)-2-[5-amino-1-(5-phospho-beta-D-ribosyl)imidazole-4-carboxamido]succinate + ADP + phosphate + 2 H(+). It functions in the pathway purine metabolism; IMP biosynthesis via de novo pathway; 5-amino-1-(5-phospho-D-ribosyl)imidazole-4-carboxamide from 5-amino-1-(5-phospho-D-ribosyl)imidazole-4-carboxylate: step 1/2. The chain is Phosphoribosylaminoimidazole-succinocarboxamide synthase from Lactiplantibacillus plantarum (strain ATCC BAA-793 / NCIMB 8826 / WCFS1) (Lactobacillus plantarum).